Consider the following 281-residue polypeptide: tRNA dimethylallyltransferase (281 aa).

Interaction with substrate tRNA regions lie at residues D13–Q16 and Q133–R137.

It belongs to the IPP transferase family. Monomer. The cofactor is Mg(2+).

The catalysed reaction is adenosine(37) in tRNA + dimethylallyl diphosphate = N(6)-dimethylallyladenosine(37) in tRNA + diphosphate. Catalyzes the transfer of a dimethylallyl group onto the adenine at position 37 in tRNAs that read codons beginning with uridine, leading to the formation of N6-(dimethylallyl)adenosine (i(6)A). The protein is tRNA dimethylallyltransferase of Novosphingobium aromaticivorans (strain ATCC 700278 / DSM 12444 / CCUG 56034 / CIP 105152 / NBRC 16084 / F199).